Reading from the N-terminus, the 358-residue chain is Peptide chain release factor 1 (358 aa).

An N5-methylglutamine modification is found at glutamine 236.

It belongs to the prokaryotic/mitochondrial release factor family. Methylated by PrmC. Methylation increases the termination efficiency of RF1.

The protein localises to the cytoplasm. Peptide chain release factor 1 directs the termination of translation in response to the peptide chain termination codons UAG and UAA. In Corynebacterium efficiens (strain DSM 44549 / YS-314 / AJ 12310 / JCM 11189 / NBRC 100395), this protein is Peptide chain release factor 1.